A 238-amino-acid chain; its full sequence is Ubiquitin-conjugating enzyme E2 R2 (238 aa).

One can recognise a UBC core domain in the interval 8-174; that stretch reads SSQKALMLEL…IRKQVSATKA (167 aa). The Glycyl thioester intermediate role is filled by cysteine 93. Positions 98–113 are important for ubiquitin transfer; sequence HPPVDDPQSGELPSER. The tract at residues 194–238 is disordered; sequence TKVPSNDNSSDLLYDDLYDDDIDDEDEEEEDADCYDDDDSGNEES. The segment covering 206–238 has biased composition (acidic residues); sequence LYDDLYDDDIDDEDEEEEDADCYDDDDSGNEES. Serine 233 bears the Phosphoserine; by CK2 mark.

It belongs to the ubiquitin-conjugating enzyme family. Interacts with multiple Cul1-RING E3 ubiquitin-protein ligase complexes, also known as SCF (SKP1-CUL1-F-box protein) complexes, including SCF(FBXW7) and SCF(BTRC). Interacts with multiple Cul2-RING (CRL2) E3 ubiquitin-protein ligase complexes, also known as ECS (Elongin BC-CUL2/5-SOCS-box protein) complexes, including CRL2(FEM1C) and ECS(VHL). When phosphorylated, interacts with beta-TrCP (BTRC).

The catalysed reaction is S-ubiquitinyl-[E1 ubiquitin-activating enzyme]-L-cysteine + [E2 ubiquitin-conjugating enzyme]-L-cysteine = [E1 ubiquitin-activating enzyme]-L-cysteine + S-ubiquitinyl-[E2 ubiquitin-conjugating enzyme]-L-cysteine.. The protein operates within protein modification; protein ubiquitination. Neddylation of CUL2 in the CRL2(FEM1C) E3 ligase complex increases substrate affinity of UBE2R2 and the ubiquitin-transfer rate in the E2-E3 complex. In terms of biological role, E2 ubiquitin-conjugating enzyme that accepts ubiquitin from an E1 ubiquitin-activating protein, and catalyzes its covalent attachment to other proteins by an E3 ubiquitin-protein ligase complex. In vitro catalyzes monoubiquitination and 'Lys-48'-linked polyubiquitination. Works in collaboration with various Cul1-RING and Cul2-RING E3 ligase complexes. May be involved in degradation of katenin. In Homo sapiens (Human), this protein is Ubiquitin-conjugating enzyme E2 R2 (UBE2R2).